Consider the following 270-residue polypeptide: Formamidopyrimidine-DNA glycosylase (270 aa).

The Schiff-base intermediate with DNA role is filled by P2. The active-site Proton donor is E3. K58 functions as the Proton donor; for beta-elimination activity in the catalytic mechanism. Residues H91, R110, and K151 each coordinate DNA. An FPG-type zinc finger spans residues 236–270 (FVYGRGGEACKVCGTELRNVVLGQRASVFCPRCQR). R260 functions as the Proton donor; for delta-elimination activity in the catalytic mechanism.

Belongs to the FPG family. As to quaternary structure, monomer. The cofactor is Zn(2+).

The catalysed reaction is Hydrolysis of DNA containing ring-opened 7-methylguanine residues, releasing 2,6-diamino-4-hydroxy-5-(N-methyl)formamidopyrimidine.. It carries out the reaction 2'-deoxyribonucleotide-(2'-deoxyribose 5'-phosphate)-2'-deoxyribonucleotide-DNA = a 3'-end 2'-deoxyribonucleotide-(2,3-dehydro-2,3-deoxyribose 5'-phosphate)-DNA + a 5'-end 5'-phospho-2'-deoxyribonucleoside-DNA + H(+). Involved in base excision repair of DNA damaged by oxidation or by mutagenic agents. Acts as a DNA glycosylase that recognizes and removes damaged bases. Has a preference for oxidized purines, such as 7,8-dihydro-8-oxoguanine (8-oxoG). Has AP (apurinic/apyrimidinic) lyase activity and introduces nicks in the DNA strand. Cleaves the DNA backbone by beta-delta elimination to generate a single-strand break at the site of the removed base with both 3'- and 5'-phosphates. The polypeptide is Formamidopyrimidine-DNA glycosylase (Pseudomonas fluorescens (strain SBW25)).